The sequence spans 349 residues: Anthranilate phosphoribosyltransferase (349 aa).

5-phospho-alpha-D-ribose 1-diphosphate is bound by residues Gly-82, Gly-85 to Asp-86, Asn-92 to Thr-95, Lys-110 to Gly-118, and Ser-122. Gly-82 contributes to the anthranilate binding site. A Mg(2+)-binding site is contributed by Ser-94. An anthranilate-binding site is contributed by Asn-113. Residue Arg-168 coordinates anthranilate. Asp-227 and Glu-228 together coordinate Mg(2+).

This sequence belongs to the anthranilate phosphoribosyltransferase family. Homodimer. Mg(2+) is required as a cofactor.

It carries out the reaction N-(5-phospho-beta-D-ribosyl)anthranilate + diphosphate = 5-phospho-alpha-D-ribose 1-diphosphate + anthranilate. Its pathway is amino-acid biosynthesis; L-tryptophan biosynthesis; L-tryptophan from chorismate: step 2/5. Catalyzes the transfer of the phosphoribosyl group of 5-phosphorylribose-1-pyrophosphate (PRPP) to anthranilate to yield N-(5'-phosphoribosyl)-anthranilate (PRA). The sequence is that of Anthranilate phosphoribosyltransferase from Pseudomonas putida (strain ATCC 47054 / DSM 6125 / CFBP 8728 / NCIMB 11950 / KT2440).